The primary structure comprises 377 residues: 3-dehydroquinate synthase (377 aa).

Residues G113–D117, T137–T138, K150, K159, and F177–T180 each bind NAD(+). Residues E192, H254, and H273 each contribute to the Zn(2+) site.

Belongs to the sugar phosphate cyclases superfamily. Dehydroquinate synthase family. The cofactor is Co(2+). Zn(2+) serves as cofactor. It depends on NAD(+) as a cofactor.

The protein localises to the cytoplasm. The enzyme catalyses 7-phospho-2-dehydro-3-deoxy-D-arabino-heptonate = 3-dehydroquinate + phosphate. The protein operates within metabolic intermediate biosynthesis; chorismate biosynthesis; chorismate from D-erythrose 4-phosphate and phosphoenolpyruvate: step 2/7. Functionally, catalyzes the conversion of 3-deoxy-D-arabino-heptulosonate 7-phosphate (DAHP) to dehydroquinate (DHQ). This is 3-dehydroquinate synthase from Bartonella quintana (strain Toulouse) (Rochalimaea quintana).